A 353-amino-acid polypeptide reads, in one-letter code: Anthranilate phosphoribosyltransferase (353 aa).

Residues G87, 90–91 (GD), T95, 97–100 (NIST), 115–123 (KHGNRAASS), and T127 each bind 5-phospho-alpha-D-ribose 1-diphosphate. G87 contributes to the anthranilate binding site. S99 is a Mg(2+) binding site. Residue N118 participates in anthranilate binding. An anthranilate-binding site is contributed by R173. Mg(2+) contacts are provided by D231 and E232.

The protein belongs to the anthranilate phosphoribosyltransferase family. Homodimer. The cofactor is Mg(2+).

The catalysed reaction is N-(5-phospho-beta-D-ribosyl)anthranilate + diphosphate = 5-phospho-alpha-D-ribose 1-diphosphate + anthranilate. It participates in amino-acid biosynthesis; L-tryptophan biosynthesis; L-tryptophan from chorismate: step 2/5. Functionally, catalyzes the transfer of the phosphoribosyl group of 5-phosphorylribose-1-pyrophosphate (PRPP) to anthranilate to yield N-(5'-phosphoribosyl)-anthranilate (PRA). In Salinispora arenicola (strain CNS-205), this protein is Anthranilate phosphoribosyltransferase.